Here is a 421-residue protein sequence, read N- to C-terminus: Testin (421 aa).

The 108-residue stretch at 92 to 199 (MILTNPVAAK…GDVKLPCEMD (108 aa)) folds into the PET domain. Residues 133–164 (EKQPVAGSEGAQYRKKQLAKQLPAHDQDPSKC) form a disordered region. Residues 155 to 164 (PAHDQDPSKC) are compositionally biased toward basic and acidic residues. 3 consecutive LIM zinc-binding domains span residues 234–297 (YSCY…CDSE), 299–359 (PRCA…NHAV), and 362–421 (QGCH…KMMS).

It belongs to the prickle / espinas / testin family. As to quaternary structure, interacts via LIM domain 1 with ZYX. Interacts (via LIM domain 3) with ENAH and VASP. Interacts with ALKBH4, talin, actin, alpha-actinin, GRIP1 and PXN. Interacts (via LIM domain 2) with ACTL7A (via N-terminus). Heterodimer with ACTL7A; the heterodimer interacts with ENAH to form a heterotrimer.

It localises to the cytoplasm. The protein resides in the cell junction. The protein localises to the focal adhesion. Functionally, scaffold protein that may play a role in cell adhesion, cell spreading and in the reorganization of the actin cytoskeleton. Plays a role in the regulation of cell proliferation. May act as a tumor suppressor. This chain is Testin (TES), found in Microcebus murinus (Gray mouse lemur).